The primary structure comprises 198 residues: Probable chemoreceptor glutamine deamidase CheD (198 aa).

Belongs to the CheD family.

The catalysed reaction is L-glutaminyl-[protein] + H2O = L-glutamyl-[protein] + NH4(+). In terms of biological role, probably deamidates glutamine residues to glutamate on methyl-accepting chemotaxis receptors (MCPs), playing an important role in chemotaxis. This chain is Probable chemoreceptor glutamine deamidase CheD, found in Stenotrophomonas maltophilia (strain R551-3).